The sequence spans 449 residues: MSKFSPPINRNMVELDRSFFYKEVPLLAAYFPNPKFLGQFVKSCQNDILYVQTVKHIISMDDSKAILLRDDVKSISDLNPETQLKINEFGIILKPYTLKLDYSFWKSEEILKSILPENLIDDVPSGFSQAGHLAHINLRDEYKPFGKLIGQVILDKNPSVLTVVDKVNTIANKFRTFPLELLAGEPNYIVEQSESGCKFKFDFSKVYWNSRLSTEHERIIGKFNPGDVVGDVFGGVGPFAIPASKKNVIVLANDLNPESYKYLQENIKINKVEPFIKPFNLDGREFIRKAPELLLQWHNSQNGIIEKIIIKKVSIDDNKTKKIFERKPIIETTKIPKFYHHFVMNLPDSALTFLDEFIGLYGSNPQLKTDPEFKLPIIHVHCFEKFENNENPTPEELHNRVYEKICKLIQFPLNKKKVEFHEVRMVSPTKPMFCVSFELPEEVAFKQTK.

S-adenosyl-L-methionine contacts are provided by residues His-216, 254–255, 282–283, and Asn-345; these read DL and DG.

This sequence belongs to the class I-like SAM-binding methyltransferase superfamily. TRM5/TYW2 family. In terms of assembly, monomer.

Its subcellular location is the mitochondrion matrix. It is found in the nucleus. The protein localises to the cytoplasm. The catalysed reaction is guanosine(37) in tRNA + S-adenosyl-L-methionine = N(1)-methylguanosine(37) in tRNA + S-adenosyl-L-homocysteine + H(+). Its function is as follows. Specifically methylates the N1 position of guanosine-37 in various cytoplasmic and mitochondrial tRNAs. Methylation is not dependent on the nature of the nucleoside 5' of the target nucleoside. This is the first step in the biosynthesis of wybutosine (yW), a modified base adjacent to the anticodon of tRNAs and required for accurate decoding. The chain is tRNA (guanine(37)-N(1))-methyltransferase from Candida albicans (strain WO-1) (Yeast).